Reading from the N-terminus, the 761-residue chain is Phosphoribosylformylglycinamidine synthase subunit PurL (761 aa).

H49 is an active-site residue. Y52 and K92 together coordinate ATP. E94 contributes to the Mg(2+) binding site. Substrate-binding positions include 95–98 (SHNH) and R117. Residue H96 is the Proton acceptor of the active site. Residue D118 coordinates Mg(2+). Q241 serves as a coordination point for substrate. Residue D269 coordinates Mg(2+). 318-320 (ESQ) provides a ligand contact to substrate. ATP-binding residues include N502 and G539. Residue N540 coordinates Mg(2+). S542 contacts substrate.

This sequence belongs to the FGAMS family. Monomer. Part of the FGAM synthase complex composed of 1 PurL, 1 PurQ and 2 PurS subunits.

Its subcellular location is the cytoplasm. The catalysed reaction is N(2)-formyl-N(1)-(5-phospho-beta-D-ribosyl)glycinamide + L-glutamine + ATP + H2O = 2-formamido-N(1)-(5-O-phospho-beta-D-ribosyl)acetamidine + L-glutamate + ADP + phosphate + H(+). The protein operates within purine metabolism; IMP biosynthesis via de novo pathway; 5-amino-1-(5-phospho-D-ribosyl)imidazole from N(2)-formyl-N(1)-(5-phospho-D-ribosyl)glycinamide: step 1/2. In terms of biological role, part of the phosphoribosylformylglycinamidine synthase complex involved in the purines biosynthetic pathway. Catalyzes the ATP-dependent conversion of formylglycinamide ribonucleotide (FGAR) and glutamine to yield formylglycinamidine ribonucleotide (FGAM) and glutamate. The FGAM synthase complex is composed of three subunits. PurQ produces an ammonia molecule by converting glutamine to glutamate. PurL transfers the ammonia molecule to FGAR to form FGAM in an ATP-dependent manner. PurS interacts with PurQ and PurL and is thought to assist in the transfer of the ammonia molecule from PurQ to PurL. The polypeptide is Phosphoribosylformylglycinamidine synthase subunit PurL (Chlorobium luteolum (strain DSM 273 / BCRC 81028 / 2530) (Pelodictyon luteolum)).